The sequence spans 349 residues: GMP reductase (349 aa).

Residue 108-131 participates in NADP(+) binding; the sequence is IDFLKIKKIFLLSSELKYICIDVA. K(+)-binding residues include glycine 181 and glycine 183. The active-site Thioimidate intermediate is the cysteine 186. An NADP(+)-binding site is contributed by 216-239; the sequence is IISDGGCTVSGDIAKAFGGGADFV.

It belongs to the IMPDH/GMPR family. GuaC type 1 subfamily. As to quaternary structure, homotetramer.

It carries out the reaction IMP + NH4(+) + NADP(+) = GMP + NADPH + 2 H(+). Functionally, catalyzes the irreversible NADPH-dependent deamination of GMP to IMP. It functions in the conversion of nucleobase, nucleoside and nucleotide derivatives of G to A nucleotides, and in maintaining the intracellular balance of A and G nucleotides. This Buchnera aphidicola subsp. Acyrthosiphon pisum (strain 5A) protein is GMP reductase.